A 113-amino-acid polypeptide reads, in one-letter code: Putative insulin-like growth factor 2-associated protein (113 aa).

In terms of tissue distribution, expressed in fetal and adult liver.

This is Putative insulin-like growth factor 2-associated protein from Homo sapiens (Human).